We begin with the raw amino-acid sequence, 503 residues long: Aromatase 2 (503 aa).

Cys437 provides a ligand contact to heme.

This sequence belongs to the cytochrome P450 family. The cofactor is heme.

The protein resides in the membrane. It carries out the reaction testosterone + 3 reduced [NADPH--hemoprotein reductase] + 3 O2 = 17beta-estradiol + formate + 3 oxidized [NADPH--hemoprotein reductase] + 4 H2O + 4 H(+). The catalysed reaction is androst-4-ene-3,17-dione + 3 reduced [NADPH--hemoprotein reductase] + 3 O2 = estrone + formate + 3 oxidized [NADPH--hemoprotein reductase] + 4 H2O + 4 H(+). In terms of biological role, catalyzes the formation of aromatic C18 estrogens from C19 androgens. This is Aromatase 2 (CYP19A2) from Sus scrofa (Pig).